The following is a 175-amino-acid chain: Nucleoside-triphosphatase THEP1 (175 aa).

ATP contacts are provided by residues 8–15 and 99–106; these read GSPGVGKS and LVVIDEIG.

It belongs to the THEP1 NTPase family.

The catalysed reaction is a ribonucleoside 5'-triphosphate + H2O = a ribonucleoside 5'-diphosphate + phosphate + H(+). In terms of biological role, has nucleotide phosphatase activity towards ATP, GTP, CTP, TTP and UTP. May hydrolyze nucleoside diphosphates with lower efficiency. This Methanosarcina acetivorans (strain ATCC 35395 / DSM 2834 / JCM 12185 / C2A) protein is Nucleoside-triphosphatase THEP1.